The primary structure comprises 255 residues: Ribosomal RNA small subunit methyltransferase G 2 (255 aa).

Residues glycine 90, phenylalanine 95, and arginine 155 each coordinate S-adenosyl-L-methionine. The span at 233–245 (EDEGEELLMDELS) shows a compositional bias: acidic residues. The interval 233–255 (EDEGEELLMDELSNEEKRRWAKY) is disordered. A compositionally biased stretch (basic and acidic residues) spans 246–255 (NEEKRRWAKY).

Belongs to the methyltransferase superfamily. RNA methyltransferase RsmG family.

It localises to the cytoplasm. It carries out the reaction guanosine(527) in 16S rRNA + S-adenosyl-L-methionine = N(7)-methylguanosine(527) in 16S rRNA + S-adenosyl-L-homocysteine. Specifically methylates the N7 position of guanine in position 527 of 16S rRNA. In Bdellovibrio bacteriovorus (strain ATCC 15356 / DSM 50701 / NCIMB 9529 / HD100), this protein is Ribosomal RNA small subunit methyltransferase G 2.